A 114-amino-acid polypeptide reads, in one-letter code: uncharacterized protein (114 aa).

Disordered stretches follow at residues 26 to 45 (GMKQ…DALG) and 72 to 98 (PKGS…SVQA).

This is an uncharacterized protein from Homo sapiens (Human).